The chain runs to 236 residues: 2,3,4,5-tetrahydropyridine-2,6-dicarboxylate N-acetyltransferase (236 aa).

The protein belongs to the transferase hexapeptide repeat family. DapH subfamily.

It catalyses the reaction (S)-2,3,4,5-tetrahydrodipicolinate + acetyl-CoA + H2O = L-2-acetamido-6-oxoheptanedioate + CoA. It functions in the pathway amino-acid biosynthesis; L-lysine biosynthesis via DAP pathway; LL-2,6-diaminopimelate from (S)-tetrahydrodipicolinate (acetylase route): step 1/3. Catalyzes the transfer of an acetyl group from acetyl-CoA to tetrahydrodipicolinate. The polypeptide is 2,3,4,5-tetrahydropyridine-2,6-dicarboxylate N-acetyltransferase (Clostridium botulinum (strain Eklund 17B / Type B)).